Here is a 383-residue protein sequence, read N- to C-terminus: Homoserine O-succinyltransferase (383 aa).

The AB hydrolase-1 domain occupies 51-361 (NALLICHALS…ESDFGHDAFL (311 aa)). Catalysis depends on Ser157, which acts as the Nucleophile. Arg227 is a substrate binding site. Residues Asp324 and His357 contribute to the active site. Residue Asp358 coordinates substrate.

The protein belongs to the AB hydrolase superfamily. MetX family. Homodimer.

The protein resides in the cytoplasm. The enzyme catalyses L-homoserine + succinyl-CoA = O-succinyl-L-homoserine + CoA. The protein operates within amino-acid biosynthesis; L-methionine biosynthesis via de novo pathway; O-succinyl-L-homoserine from L-homoserine: step 1/1. Its function is as follows. Transfers a succinyl group from succinyl-CoA to L-homoserine, forming succinyl-L-homoserine. The polypeptide is Homoserine O-succinyltransferase (Teredinibacter turnerae (strain ATCC 39867 / T7901)).